The sequence spans 400 residues: Enoyl-[acyl-carrier-protein] reductase [NADH] 1 (400 aa).

NAD(+) contacts are provided by residues 48 to 53, 74 to 75, 111 to 112, and 139 to 140; these read GASSGY, FE, DA, and LA. Tyr-225 provides a ligand contact to substrate. The active-site Proton donor is Tyr-235. NAD(+)-binding positions include Lys-244 and 273–275; that span reads VVT.

This sequence belongs to the TER reductase family. As to quaternary structure, monomer.

It carries out the reaction a 2,3-saturated acyl-[ACP] + NAD(+) = a (2E)-enoyl-[ACP] + NADH + H(+). It participates in lipid metabolism; fatty acid biosynthesis. Its function is as follows. Involved in the final reduction of the elongation cycle of fatty acid synthesis (FAS II). Catalyzes the reduction of a carbon-carbon double bond in an enoyl moiety that is covalently linked to an acyl carrier protein (ACP). This Vibrio vulnificus (strain CMCP6) protein is Enoyl-[acyl-carrier-protein] reductase [NADH] 1.